A 242-amino-acid polypeptide reads, in one-letter code: ATP synthase subunit b (242 aa).

Transmembrane regions (helical) follow at residues 8 to 28 and 87 to 107; these read VLPFLLVLLFAFAPLALASAP and LMDLFWRVLNFAVLMAILIKF.

It belongs to the ATPase B chain family. As to quaternary structure, F-type ATPases have 2 components, F(1) - the catalytic core - and F(0) - the membrane proton channel. F(1) has five subunits: alpha(3), beta(3), gamma(1), delta(1), epsilon(1). F(0) has three main subunits: a(1), b(2) and c(10-14). The alpha and beta chains form an alternating ring which encloses part of the gamma chain. F(1) is attached to F(0) by a central stalk formed by the gamma and epsilon chains, while a peripheral stalk is formed by the delta and b chains.

The protein localises to the cell inner membrane. F(1)F(0) ATP synthase produces ATP from ADP in the presence of a proton or sodium gradient. F-type ATPases consist of two structural domains, F(1) containing the extramembraneous catalytic core and F(0) containing the membrane proton channel, linked together by a central stalk and a peripheral stalk. During catalysis, ATP synthesis in the catalytic domain of F(1) is coupled via a rotary mechanism of the central stalk subunits to proton translocation. Its function is as follows. Component of the F(0) channel, it forms part of the peripheral stalk, linking F(1) to F(0). This is ATP synthase subunit b from Desulfotalea psychrophila (strain LSv54 / DSM 12343).